Reading from the N-terminus, the 240-residue chain is Mitochondrial transcription rescue factor 1 (240 aa).

The N-terminal 83 residues, 1 to 83, are a transit peptide targeting the mitochondrion; that stretch reads MAVPGVRLLT…ECYFPFSIRL (83 aa). The interval 92–127 is disordered; that stretch reads STKKTLQKEADEEDSDEETSYPERSEQEEELESEPG. Positions 101–124 are enriched in acidic residues; that stretch reads ADEEDSDEETSYPERSEQEEELES. 2 positions are modified to phosphoserine: Ser106 and Ser116. Positions 142 to 217 constitute an S4 RNA-binding domain; sequence FRYDVILKTG…LKKVYEEKTE (76 aa).

In terms of assembly, monomer. Interacts with POLRMT. Interacts (via S4 domain) with MTRFR (via C-terminus). Associates with mitoribosomal S39 large subunit, peptidyl tRNA and nascent chain.

The protein localises to the mitochondrion matrix. In terms of biological role, mitochondrial RNA-binding protein involved in mitochondrial transcription regulation. Functions as a protective factor to maintain proper mitochondrial RNA level during stress. Acts at the transcription level and its protective function depends on its RNA binding ability. Part of a mitoribosome-associated quality control pathway that prevents aberrant translation by responding to interruptions during elongation. As heterodimer with MTRF, ejects the unfinished nascent chain and peptidyl transfer RNA (tRNA), respectively, from stalled ribosomes. Recruitment of mitoribosome biogenesis factors to these quality control intermediates suggests additional roles for MTRES1 and MTRF during mitoribosome rescue. The chain is Mitochondrial transcription rescue factor 1 (Mtres1) from Mus musculus (Mouse).